A 493-amino-acid polypeptide reads, in one-letter code: 3-octaprenyl-4-hydroxybenzoate carboxy-lyase (493 aa).

Asparagine 175 provides a ligand contact to Mn(2+). Residues 178 to 180, 192 to 194, and 197 to 198 contribute to the prenylated FMN site; these read IYR, RWL, and RG. Glutamate 241 provides a ligand contact to Mn(2+). The Proton donor role is filled by aspartate 290.

The protein belongs to the UbiD family. In terms of assembly, homohexamer. Prenylated FMN serves as cofactor. Requires Mn(2+) as cofactor.

The protein resides in the cell membrane. It carries out the reaction a 4-hydroxy-3-(all-trans-polyprenyl)benzoate + H(+) = a 2-(all-trans-polyprenyl)phenol + CO2. It functions in the pathway cofactor biosynthesis; ubiquinone biosynthesis. Functionally, catalyzes the decarboxylation of 3-octaprenyl-4-hydroxy benzoate to 2-octaprenylphenol, an intermediate step in ubiquinone biosynthesis. In Photorhabdus laumondii subsp. laumondii (strain DSM 15139 / CIP 105565 / TT01) (Photorhabdus luminescens subsp. laumondii), this protein is 3-octaprenyl-4-hydroxybenzoate carboxy-lyase.